A 621-amino-acid polypeptide reads, in one-letter code: Amino-acid acetyltransferase, mitochondrial (621 aa).

The N-terminal 77 residues, 1-77 (MIPRAPPSTQ…RSYLASFGVQ (77 aa)), are a transit peptide targeting the mitochondrion. Positions 213–233 (PKPGSEEESEPGFSPPETHIY) are disordered. In terms of domain architecture, N-acetyltransferase spans 424–600 (LPIRVVRSVS…GSAGLSFIED (177 aa)).

This sequence belongs to the acetyltransferase family.

It is found in the mitochondrion. It carries out the reaction L-glutamate + acetyl-CoA = N-acetyl-L-glutamate + CoA + H(+). The protein operates within amino-acid biosynthesis; L-arginine biosynthesis; N(2)-acetyl-L-ornithine from L-glutamate: step 1/4. Functionally, N-acetylglutamate synthase involved in arginine biosynthesis. The sequence is that of Amino-acid acetyltransferase, mitochondrial (ARG2) from Coprinopsis cinerea (strain Okayama-7 / 130 / ATCC MYA-4618 / FGSC 9003) (Inky cap fungus).